The chain runs to 717 residues: CRISPR-associated protein Cas8b (717 aa).

Disordered stretches follow at residues 263 to 283 (IGVFSVKHPDAQPGLRQDQSW) and 698 to 717 (HEKEDEDDQDTEEPAESTTN). Residues 701–717 (EDEDDQDTEEPAESTTN) show a composition bias toward acidic residues.

It is found in the cytoplasm. CRISPR (clustered regularly interspaced short palindromic repeat) is an adaptive immune system that provides protection against mobile genetic elements (viruses, transposable elements and conjugative plasmids). CRISPR clusters contain sequences complementary to antecedent mobile elements and target invading nucleic acids. CRISPR clusters are transcribed and processed into CRISPR RNA (crRNA). Plasmid targeted by CRISPR locus P1 transform wild-type cells very poorly. This subunit might be involved in stabilizing crRNA. The chain is CRISPR-associated protein Cas8b from Haloferax volcanii (strain ATCC 29605 / DSM 3757 / JCM 8879 / NBRC 14742 / NCIMB 2012 / VKM B-1768 / DS2) (Halobacterium volcanii).